The sequence spans 371 residues: Glutamate 5-kinase (371 aa).

Lys-11 is a binding site for ATP. Ser-52, Asp-139, and Asn-151 together coordinate substrate. Residues Thr-171 to Asp-172 and Thr-213 to Lys-219 each bind ATP. Residues Glu-278–Glu-356 form the PUA domain.

It belongs to the glutamate 5-kinase family.

It localises to the cytoplasm. It carries out the reaction L-glutamate + ATP = L-glutamyl 5-phosphate + ADP. It functions in the pathway amino-acid biosynthesis; L-proline biosynthesis; L-glutamate 5-semialdehyde from L-glutamate: step 1/2. Its function is as follows. Catalyzes the transfer of a phosphate group to glutamate to form L-glutamate 5-phosphate. The chain is Glutamate 5-kinase from Synechococcus sp. (strain JA-3-3Ab) (Cyanobacteria bacterium Yellowstone A-Prime).